A 193-amino-acid chain; its full sequence is Probable 3' cyclic ADP-D-ribose synthase ThsB' (193 aa).

As to quaternary structure, homodimer.

It catalyses the reaction NAD(+) = 3'cADPR + nicotinamide + H(+). TIR-like domain-containing component of the Thoeris antiviral defense system, composed of ThsA and ThsB and ThsB'. In the presence of NAD(+) produces a signaling molecule that activates cognate ThsA (AC J8G6Z1) to hydrolyze NAD(+). The signaling molecule is a cyclic ADP-D-ribose isomer and may be 3' cyclic ADP-D-ribose (3'cADPR); it is not 2'cADPR. The sequence is that of Probable 3' cyclic ADP-D-ribose synthase ThsB' from Bacillus cereus (strain MSX-D12).